Reading from the N-terminus, the 215-residue chain is Pyrrolidone-carboxylate peptidase (215 aa).

Residues glutamate 80, cysteine 143, and histidine 167 contribute to the active site.

The protein belongs to the peptidase C15 family. As to quaternary structure, homotetramer.

It localises to the cytoplasm. It catalyses the reaction Release of an N-terminal pyroglutamyl group from a polypeptide, the second amino acid generally not being Pro.. Functionally, removes 5-oxoproline from various penultimate amino acid residues except L-proline. This Yersinia pseudotuberculosis serotype O:1b (strain IP 31758) protein is Pyrrolidone-carboxylate peptidase.